Reading from the N-terminus, the 156-residue chain is Large ribosomal subunit protein uL13 (156 aa).

Belongs to the universal ribosomal protein uL13 family. As to quaternary structure, part of the 50S ribosomal subunit.

This protein is one of the early assembly proteins of the 50S ribosomal subunit, although it is not seen to bind rRNA by itself. It is important during the early stages of 50S assembly. This Archaeoglobus fulgidus (strain ATCC 49558 / DSM 4304 / JCM 9628 / NBRC 100126 / VC-16) protein is Large ribosomal subunit protein uL13.